Here is a 290-residue protein sequence, read N- to C-terminus: Protein-lysine methyltransferase METTL21E (290 aa).

S-adenosyl-L-methionine is bound by residues Trp96, 124–126 (GAG), Asp145, Trp176, and Ala197.

This sequence belongs to the methyltransferase superfamily. METTL21 family.

Functionally, protein-lysine methyltransferase. This Bos taurus (Bovine) protein is Protein-lysine methyltransferase METTL21E (METTL21E).